Reading from the N-terminus, the 145-residue chain is Cell division protein SepF (145 aa).

The protein belongs to the SepF family. Homodimer. Interacts with FtsZ.

It localises to the cytoplasm. Cell division protein that is part of the divisome complex and is recruited early to the Z-ring. Probably stimulates Z-ring formation, perhaps through the cross-linking of FtsZ protofilaments. Its function overlaps with FtsA. The protein is Cell division protein SepF of Lactobacillus helveticus (strain DPC 4571).